The following is a 1192-amino-acid chain: Reticulon-4 (1192 aa).

An N-acetylmethionine modification is found at methionine 1. The interval 1–204 (MEDLDQSPLV…ASEPVIRSSA (204 aa)) is disordered. At 1–1018 (MEDLDQSPLV…LYWRDIKKTG (1018 aa)) the chain is on the cytoplasmic side. A phosphoserine mark is found at serine 7 and serine 15. Over residues 31–53 (PEDEEEEEEEEEEDEDEDLEELE) the composition is skewed to acidic residues. Over residues 65–77 (AAPVPTAPAAGAP) the composition is skewed to low complexity. Residues 87–101 (PPAPRGPLPAAPPVA) are compositionally biased toward pro residues. Residue serine 107 is modified to Phosphoserine. Residues 110–132 (PSPVSSTVPAPSPLSAAAVSPSK) are compositionally biased toward low complexity. Residues 141 to 150 (ARPPPPPPAS) are compositionally biased toward pro residues. Serine 152 bears the Phosphoserine mark. The segment covering 159-173 (WTPPAPAPAAPPSTP) has biased composition (pro residues). A phosphoserine mark is found at serine 181, serine 182, serine 184, serine 361, and serine 446. The tract at residues 427 to 458 (DSLEQTNHEKDSESSNDDTSFPSTPEGIKDRS) is disordered. Threonine 450 is modified (phosphothreonine). Serine 511 carries the post-translational modification Phosphoserine. The segment covering 722–734 (AKVEQPVPDHSEL) has biased composition (basic and acidic residues). The tract at residues 722–762 (AKVEQPVPDHSELVEDSSPDSEPVDLFSDDSIPDVPQKQDE) is disordered. Positions 735 to 753 (VEDSSPDSEPVDLFSDDSI) are enriched in acidic residues. Position 749 is a phosphoserine (serine 749). Position 858 is a phosphothreonine (threonine 858). Phosphoserine occurs at positions 881 and 991. In terms of domain architecture, Reticulon spans 1005–1192 (VVDLLYWRDI…KIPGLKRKAE (188 aa)). Residues 1019 to 1039 (VVFGASLFLLLSLTVFSIVSV) form a helical membrane-spanning segment. The Lumenal segment spans residues 1040–1133 (TAYIALALLS…LMWVFTYVGA (94 aa)). Lysine 1104 is subject to N6-acetyllysine. Residues 1134 to 1154 (LFNGLTLLILALISLFSVPVI) form a helical membrane-spanning segment. Topologically, residues 1155-1192 (YERHQAQIDHYLGLANKNVKDAMAKIQAKIPGLKRKAE) are cytoplasmic.

As to quaternary structure, binds to RTN4R. Interacts with ATL1. Interacts with TMEM170A. Interacts with RTN4IP1. Interacts in trans with CNTNAP1. Interacts with REEP5. Interacts with synaptic plasticity regulator PANTS; the interaction results in enhanced RTN4-mediated inhibition of AMPA receptor clustering. Interacts with GPR50. In terms of assembly, homodimer. Interacts with BAD/Bcl-xl and BCL2. Interact with RTN3. Interacts with NGBR. Interacts with SPTLC1. Interacts with GRAMD4. Interacts with CDH5. Interacts with BACE1 and BACE2. Interacts with REEP5. Interacts with RETREG3. As to quaternary structure, interacts with BACE1 and BACE2. Interacts with TMEM33. Isoform A: is specifically expressed in brain and testis and weakly in heart and skeletal muscle. Isoform B: widely expressed except for the liver. Highly expressed in endothelial cells and vascular smooth muscle cells, including blood vessels and mesenteric arteries. Isoform C: is expressed in brain, skeletal muscle and adipocytes. Isoform D is testis-specific.

It localises to the endoplasmic reticulum membrane. It is found in the cell membrane. Its subcellular location is the synapse. The protein resides in the cell junction. Functionally, required to induce the formation and stabilization of endoplasmic reticulum (ER) tubules. They regulate membrane morphogenesis in the ER by promoting tubular ER production. They influence nuclear envelope expansion, nuclear pore complex formation and proper localization of inner nuclear membrane proteins. However each isoform have specific functions mainly depending on their tissue expression specificities. Developmental neurite growth regulatory factor with a role as a negative regulator of axon-axon adhesion and growth, and as a facilitator of neurite branching. Regulates neurite fasciculation, branching and extension in the developing nervous system. Involved in down-regulation of growth, stabilization of wiring and restriction of plasticity in the adult CNS. Regulates the radial migration of cortical neurons via an RTN4R-LINGO1 containing receptor complex. Acts as a negative regulator of central nervous system angiogenesis. Inhibits spreading, migration and sprouting of primary brain microvascular endothelial cells (MVECs). Also induces the retraction of MVECs lamellipodia and filopodia in a ROCK pathway-dependent manner. Its function is as follows. Mainly function in endothelial cells and vascular smooth muscle cells, is also involved in immune system regulation. Modulator of vascular remodeling, promotes the migration of endothelial cells but inhibits the migration of vascular smooth muscle cells. Regulates endothelial sphingolipid biosynthesis with direct effects on vascular function and blood pressure. Inhibits serine palmitoyltransferase, SPTLC1, the rate-limiting enzyme of the novo sphingolipid biosynthetic pathway, thereby controlling production of endothelial sphingosine-1-phosphate (S1P). Required to promote macrophage homing and functions such as cytokine/chemokine gene expression involved in angiogenesis, arteriogenesis and tissue repair. Mediates ICAM1 induced transendothelial migration of leukocytes such as monocytes and neutrophils and acute inflammation. Necessary for immune responses triggered by nucleic acid sensing TLRs, such as TLR9, is required for proper TLR9 location to endolysosomes. Also involved in immune response to LPS. Plays a role in liver regeneration through the modulation of hepatocytes proliferation. Reduces the anti-apoptotic activity of Bcl-xl and Bcl-2. This is likely consecutive to their change in subcellular location, from the mitochondria to the endoplasmic reticulum, after binding and sequestration. With isoform C, inhibits BACE1 activity and amyloid precursor protein processing. In terms of biological role, regulates cardiomyocyte apoptosis upon hypoxic conditions. With isoform B, inhibits BACE1 activity and amyloid precursor protein processing. The chain is Reticulon-4 from Homo sapiens (Human).